The primary structure comprises 118 residues: NADH-quinone oxidoreductase subunit A (118 aa).

A run of 3 helical transmembrane segments spans residues 5–25, 62–82, and 87–107; these read YAFI…PLVL, LYAL…PWAV, and LGLF…IGLV.

This sequence belongs to the complex I subunit 3 family. As to quaternary structure, NDH-1 is composed of 14 different subunits. Subunits NuoA, H, J, K, L, M, N constitute the membrane sector of the complex.

The protein localises to the cell membrane. It carries out the reaction a quinone + NADH + 5 H(+)(in) = a quinol + NAD(+) + 4 H(+)(out). NDH-1 shuttles electrons from NADH, via FMN and iron-sulfur (Fe-S) centers, to quinones in the respiratory chain. The immediate electron acceptor for the enzyme in this species is believed to be ubiquinone. Couples the redox reaction to proton translocation (for every two electrons transferred, four hydrogen ions are translocated across the cytoplasmic membrane), and thus conserves the redox energy in a proton gradient. The polypeptide is NADH-quinone oxidoreductase subunit A (Herpetosiphon aurantiacus (strain ATCC 23779 / DSM 785 / 114-95)).